Here is a 524-residue protein sequence, read N- to C-terminus: Excitatory amino acid transporter 3 (524 aa).

Residues 1-18 (MGKPARKGCDSKRFLKNN) lie on the Cytoplasmic side of the membrane. A helical membrane pass occupies residues 19-38 (WLLLSTVVAVVLGIVIGVLV). Residues 39–61 (REYSNLSTLDKFYFAFPGEILMR) are Extracellular-facing. Residue N43 is glycosylated (N-linked (GlcNAc...) asparagine). The chain crosses the membrane as a helical span at residues 62 to 82 (MLKLVILPLIVSSMITGVAAL). Residues 83-93 (DSNVSGKIGLR) lie on the Cytoplasmic side of the membrane. The helical transmembrane segment at 94–114 (AVLYYFCTTIIAVILGIVLVV) threads the bilayer. Residues Y98, T101, and T102 each contribute to the Na(+) site. The Extracellular segment spans residues 115–205 (SIKPGVTQKV…RTKEYRVVGL (91 aa)). 2 N-linked (GlcNAc...) asparagine glycosylation sites follow: N178 and N195. The chain crosses the membrane as a helical span at residues 206-229 (YSDGINVLGLIVFCLVFGLVIGKM). The Cytoplasmic segment spans residues 230 to 238 (GEKGQILVD). The helical transmembrane segment at 239–266 (FFNALSDATMKIVQIIMCYMPLGILFLI) threads the bilayer. Residues 267 to 286 (AGKIIEVEDWEIFRKLGLYM) are Extracellular-facing. The chain crosses the membrane as a helical span at residues 287–308 (VTVLSGLAIHSIVILPLIYFIV). The Cytoplasmic portion of the chain corresponds to 309–313 (VRKNP). Positions 314 to 344 (FRFAMGMTQALLTALMISSSSATLPVTFRCA) form an intramembrane region, discontinuously helical. Positions 331 and 333 each coordinate L-aspartate. At 345 to 353 (EEKNRVDKR) the chain is on the cytoplasmic side. The chain crosses the membrane as a helical span at residues 354–380 (ITRFVLPVGATINMDGTALYEAVAAVF). Na(+) contacts are provided by G362, T364, N366, and D368. T370 serves as a coordination point for L-aspartate. Topologically, residues 381–393 (IAQLNDMDLSIGQ) are extracellular. The segment at residues 394-427 (IITISVTATAASIGAAGVPQAGLVTMVIVLSAVG) is an intramembrane region (discontinuously helical). Na(+) contacts are provided by S405, I406, and A408. V411 is an L-aspartate binding site. Residues 428–440 (LPAEDVTLIIAVD) are Extracellular-facing. The helical transmembrane segment at 441 to 462 (WLLDRFRTVVNVLGDAFGTGIV) threads the bilayer. R447, T448, and N451 together coordinate L-aspartate. N451 and D455 together coordinate Na(+). Residues 463-524 (EKLSKKELEQ…TISFTQTSQF (62 aa)) lie on the Cytoplasmic side of the membrane. Residues S517 and S522 each carry the phosphoserine modification.

This sequence belongs to the dicarboxylate/amino acid:cation symporter (DAACS) (TC 2.A.23) family. SLC1A1 subfamily. Homotrimer. Interacts with ARL6IP5. Interacts with RTN2 (via N-terminus); the interaction promotes cell surface expression of SLC1A1. Interacts with SORCS2; this interaction is important for normal expression at the cell membrane. In terms of tissue distribution, brain, but also small intestine, kidney, liver and heart.

Its subcellular location is the cell membrane. The protein localises to the apical cell membrane. The protein resides in the synapse. It is found in the synaptosome. It localises to the early endosome membrane. Its subcellular location is the late endosome membrane. The protein localises to the recycling endosome membrane. It catalyses the reaction K(+)(in) + L-glutamate(out) + 3 Na(+)(out) + H(+)(out) = K(+)(out) + L-glutamate(in) + 3 Na(+)(in) + H(+)(in). The enzyme catalyses K(+)(in) + L-aspartate(out) + 3 Na(+)(out) + H(+)(out) = K(+)(out) + L-aspartate(in) + 3 Na(+)(in) + H(+)(in). It carries out the reaction D-aspartate(out) + K(+)(in) + 3 Na(+)(out) + H(+)(out) = D-aspartate(in) + K(+)(out) + 3 Na(+)(in) + H(+)(in). The catalysed reaction is K(+)(in) + L-cysteine(out) + 3 Na(+)(out) + H(+)(out) = K(+)(out) + L-cysteine(in) + 3 Na(+)(in) + H(+)(in). In terms of biological role, sodium-dependent, high-affinity amino acid transporter that mediates the uptake of L-glutamate and also L-aspartate and D-aspartate. Can also transport L-cysteine. Functions as a symporter that transports one amino acid molecule together with two or three Na(+) ions and one proton, in parallel with the counter-transport of one K(+) ion. Mediates Cl(-) flux that is not coupled to amino acid transport; this avoids the accumulation of negative charges due to aspartate and Na(+) symport. Plays an important role in L-glutamate and L-aspartate reabsorption in renal tubuli. Plays a redundant role in the rapid removal of released glutamate from the synaptic cleft, which is essential for terminating the postsynaptic action of glutamate. Contributes to glutathione biosynthesis and protection against oxidative stress via its role in L-glutamate and L-cysteine transport. Negatively regulated by ARL6IP5. The chain is Excitatory amino acid transporter 3 (SLC1A1) from Oryctolagus cuniculus (Rabbit).